Reading from the N-terminus, the 508-residue chain is TATA box-binding protein-like 1 (508 aa).

Disordered regions lie at residues 145-190 (QISY…QMHH), 236-262 (EPIPVKIEVPDVPPEGTSAANEEPMPD), and 456-479 (QKKRKRKAPVNRGPPIKRERFDDS).

Belongs to the TBP family.

It is found in the nucleus. Functionally, may be a general transcription factor. Plays an essential role for RNA polymerase II/ama-1 transcription in early embryos whereby it activates a subset of RNA polymerase II promoters and facilitates the reestablishment of transcription after mitosis. The chain is TATA box-binding protein-like 1 from Caenorhabditis elegans.